Here is a 399-residue protein sequence, read N- to C-terminus: Acetate kinase (399 aa).

Residue asparagine 7 coordinates Mg(2+). An ATP-binding site is contributed by lysine 14. Arginine 91 provides a ligand contact to substrate. The Proton donor/acceptor role is filled by aspartate 148. ATP is bound by residues 208–212, 283–285, and 331–335; these read HLGNG, DFR, and GLGEN. Glutamate 384 contributes to the Mg(2+) binding site.

The protein belongs to the acetokinase family. In terms of assembly, homodimer. Mg(2+) is required as a cofactor. The cofactor is Mn(2+).

It is found in the cytoplasm. The enzyme catalyses acetate + ATP = acetyl phosphate + ADP. It participates in metabolic intermediate biosynthesis; acetyl-CoA biosynthesis; acetyl-CoA from acetate: step 1/2. Its function is as follows. Catalyzes the formation of acetyl phosphate from acetate and ATP. Can also catalyze the reverse reaction. The chain is Acetate kinase from Desulfitobacterium hafniense (strain DSM 10664 / DCB-2).